The following is a 273-amino-acid chain: Sulfur carrier protein FdhD (273 aa).

Residue cysteine 124 is the Cysteine persulfide intermediate of the active site. 263 to 268 (FCRQSR) contributes to the Mo-bis(molybdopterin guanine dinucleotide) binding site.

This sequence belongs to the FdhD family.

It is found in the cytoplasm. Functionally, required for formate dehydrogenase (FDH) activity. Acts as a sulfur carrier protein that transfers sulfur from IscS to the molybdenum cofactor prior to its insertion into FDH. In Acinetobacter baylyi (strain ATCC 33305 / BD413 / ADP1), this protein is Sulfur carrier protein FdhD.